We begin with the raw amino-acid sequence, 201 residues long: UPF0301 protein R00917 (201 aa).

The protein belongs to the UPF0301 (AlgH) family.

The chain is UPF0301 protein R00917 from Rhizobium meliloti (strain 1021) (Ensifer meliloti).